Consider the following 200-residue polypeptide: Alpha-amylase/subtilisin inhibitor (200 aa).

The signal sequence occupies residues 1 to 22 (MVSLRLPLILLSLLAISFSCSA). 2 cysteine pairs are disulfide-bonded: Cys-63–Cys-112 and Cys-162–Cys-166.

The protein belongs to the protease inhibitor I3 (leguminous Kunitz-type inhibitor) family.

In terms of biological role, this protein inhibits independently subtilisin and T.castaneum alpha-amylase but not barley alpha-amylase. The protein is Alpha-amylase/subtilisin inhibitor (RASI) of Oryza sativa subsp. japonica (Rice).